The following is a 214-amino-acid chain: Adenylate kinase (214 aa).

Position 10–15 (10–15) interacts with ATP; sequence GAGKGT. The segment at 30–59 is NMP; the sequence is STGDMLRAAIKAGTELGKQAKSVIDAGQLV. AMP-binding positions include threonine 31, arginine 36, 57–59, 85–88, and glutamine 92; these read QLV and GFPR. The segment at 122-159 is LID; sequence GRRAHLPSGRTYHVVYNPPKEEGKDDETGEPLVIREDD. ATP is bound by residues arginine 123 and 132–133; that span reads TY. Residues arginine 156 and arginine 167 each coordinate AMP. Lysine 200 contributes to the ATP binding site.

This sequence belongs to the adenylate kinase family. Monomer.

Its subcellular location is the cytoplasm. The catalysed reaction is AMP + ATP = 2 ADP. It participates in purine metabolism; AMP biosynthesis via salvage pathway; AMP from ADP: step 1/1. Its function is as follows. Catalyzes the reversible transfer of the terminal phosphate group between ATP and AMP. Plays an important role in cellular energy homeostasis and in adenine nucleotide metabolism. The chain is Adenylate kinase from Aliivibrio fischeri (strain ATCC 700601 / ES114) (Vibrio fischeri).